Here is a 150-residue protein sequence, read N- to C-terminus: 3-hydroxyacyl-[acyl-carrier-protein] dehydratase FabZ (150 aa).

His52 is an active-site residue.

The protein belongs to the thioester dehydratase family. FabZ subfamily.

It localises to the cytoplasm. The enzyme catalyses a (3R)-hydroxyacyl-[ACP] = a (2E)-enoyl-[ACP] + H2O. Its function is as follows. Involved in unsaturated fatty acids biosynthesis. Catalyzes the dehydration of short chain beta-hydroxyacyl-ACPs and long chain saturated and unsaturated beta-hydroxyacyl-ACPs. This chain is 3-hydroxyacyl-[acyl-carrier-protein] dehydratase FabZ, found in Albidiferax ferrireducens (strain ATCC BAA-621 / DSM 15236 / T118) (Rhodoferax ferrireducens).